Consider the following 191-residue polypeptide: Fe/S biogenesis protein NfuA (191 aa).

[4Fe-4S] cluster is bound by residues Cys149 and Cys152.

The protein belongs to the NfuA family. As to quaternary structure, homodimer. The cofactor is [4Fe-4S] cluster.

In terms of biological role, involved in iron-sulfur cluster biogenesis. Binds a 4Fe-4S cluster, can transfer this cluster to apoproteins, and thereby intervenes in the maturation of Fe/S proteins. Could also act as a scaffold/chaperone for damaged Fe/S proteins. The sequence is that of Fe/S biogenesis protein NfuA from Klebsiella pneumoniae (strain 342).